The primary structure comprises 266 residues: MLDAATPTHQRVRGRAMARFTGRRLRDLHQSGSAKVLIPRVFGRAPEVVFLNTAGGITGGDRLDYALHVDDGTCVGTTQTAERAYRSHGPMGRVSTRLTIGQGATLHWVPQEMILFDGVALERDLSVEMAGDAELVMLETLVLGRAAMGEVLRDLHLRDRRRVTRGGKLAMVEAIGLGPDDFASSSPAGLNGAVATASLTLMAQDAEDRLNALRAVLPTDVRSAASAWDGRLTARFLAPQAYPLRRAVARAVEQVTCGALPRVWQI.

This sequence belongs to the UreD family. UreD, UreF and UreG form a complex that acts as a GTP-hydrolysis-dependent molecular chaperone, activating the urease apoprotein by helping to assemble the nickel containing metallocenter of UreC. The UreE protein probably delivers the nickel.

The protein localises to the cytoplasm. Required for maturation of urease via the functional incorporation of the urease nickel metallocenter. The polypeptide is Urease accessory protein UreD (Jannaschia sp. (strain CCS1)).